We begin with the raw amino-acid sequence, 125 residues long: MNPEYRNKKIENKIRGLISEGLQKIKVPEIDALKSYIVISRVLVSKDKRFADVFVSYIGDADSRKRAVELLEKYKGFFRKYIAQNLRIYTTPELRFKEDIGIEESIRINKLLDEISKNNKNISDK.

Belongs to the RbfA family. As to quaternary structure, monomer. Binds 30S ribosomal subunits, but not 50S ribosomal subunits or 70S ribosomes.

The protein resides in the cytoplasm. One of several proteins that assist in the late maturation steps of the functional core of the 30S ribosomal subunit. Associates with free 30S ribosomal subunits (but not with 30S subunits that are part of 70S ribosomes or polysomes). Required for efficient processing of 16S rRNA. May interact with the 5'-terminal helix region of 16S rRNA. This chain is Ribosome-binding factor A, found in Thermosipho melanesiensis (strain DSM 12029 / CIP 104789 / BI429).